The sequence spans 102 residues: Urease subunit beta (102 aa).

Belongs to the urease beta subunit family. Heterotrimer of UreA (gamma), UreB (beta) and UreC (alpha) subunits. Three heterotrimers associate to form the active enzyme.

The protein resides in the cytoplasm. It catalyses the reaction urea + 2 H2O + H(+) = hydrogencarbonate + 2 NH4(+). Its pathway is nitrogen metabolism; urea degradation; CO(2) and NH(3) from urea (urease route): step 1/1. The polypeptide is Urease subunit beta (Acinetobacter baumannii (strain AB307-0294)).